We begin with the raw amino-acid sequence, 273 residues long: Nitrogenase iron protein 5 (273 aa).

8–15 (GKGGIGKS) is an ATP binding site. A [4Fe-4S] cluster-binding site is contributed by Cys94. Arg97 carries the ADP-ribosylarginine; by dinitrogenase reductase ADP-ribosyltransferase modification. Cys129 is a binding site for [4Fe-4S] cluster.

The protein belongs to the NifH/BchL/ChlL family. As to quaternary structure, homodimer. Requires [4Fe-4S] cluster as cofactor. In terms of processing, the reversible ADP-ribosylation of Arg-97 inactivates the nitrogenase reductase and regulates nitrogenase activity.

It carries out the reaction N2 + 8 reduced [2Fe-2S]-[ferredoxin] + 16 ATP + 16 H2O = H2 + 8 oxidized [2Fe-2S]-[ferredoxin] + 2 NH4(+) + 16 ADP + 16 phosphate + 6 H(+). In terms of biological role, the key enzymatic reactions in nitrogen fixation are catalyzed by the nitrogenase complex, which has 2 components: the iron protein and the molybdenum-iron protein. This chain is Nitrogenase iron protein 5 (nifH5), found in Clostridium pasteurianum.